The sequence spans 700 residues: Mitogen-activated protein kinase 9 (700 aa).

In terms of domain architecture, Protein kinase spans 107-398 (YRIQEVIGKG…AEEALTDPYF (292 aa)). ATP contacts are provided by residues 113 to 121 (IGKGSYGVV) and K136. D233 serves as the catalytic Proton acceptor. Residue T269 is modified to Phosphothreonine. Residues 269–271 (TDY) carry the TXY motif. The residue at position 271 (Y271) is a Phosphotyrosine. Residues 475–523 (EESNGSGSAIPMERKHASLPRSTTVHSTPIPPKEQPLAASLKSSRPVSD) are disordered.

This sequence belongs to the protein kinase superfamily. CMGC Ser/Thr protein kinase family. MAP kinase subfamily. Dually phosphorylated on Thr-269 and Tyr-271, which activates the enzyme.

It catalyses the reaction L-seryl-[protein] + ATP = O-phospho-L-seryl-[protein] + ADP + H(+). The enzyme catalyses L-threonyl-[protein] + ATP = O-phospho-L-threonyl-[protein] + ADP + H(+). With respect to regulation, activated by threonine and tyrosine phosphorylation. The chain is Mitogen-activated protein kinase 9 (MPK9) from Oryza sativa subsp. japonica (Rice).